We begin with the raw amino-acid sequence, 189 residues long: Large ribosomal subunit protein bL9 (189 aa).

The protein belongs to the bacterial ribosomal protein bL9 family.

Binds to the 23S rRNA. In Brucella abortus (strain S19), this protein is Large ribosomal subunit protein bL9.